Here is a 461-residue protein sequence, read N- to C-terminus: Argininosuccinate lyase (461 aa).

This sequence belongs to the lyase 1 family. Argininosuccinate lyase subfamily.

Its subcellular location is the cytoplasm. It catalyses the reaction 2-(N(omega)-L-arginino)succinate = fumarate + L-arginine. Its pathway is amino-acid biosynthesis; L-arginine biosynthesis; L-arginine from L-ornithine and carbamoyl phosphate: step 3/3. This is Argininosuccinate lyase from Nitrosomonas europaea (strain ATCC 19718 / CIP 103999 / KCTC 2705 / NBRC 14298).